The primary structure comprises 29 residues: Sarcolamban B (29 aa).

The helical transmembrane segment at 7-27 threads the bilayer; that stretch reads LFTTFLILAFLLFLLYAFYEA.

In terms of assembly, interacts with SERCA. In terms of tissue distribution, strongly expressed in embryonic and larval somatic muscles and postembryonic heart.

It localises to the sarcoplasmic reticulum membrane. Functionally, plays an essential role in the regulation of calcium transport at the sarcoplasmic reticulum (SR), which is secondarily required for regular muscle contraction. In Drosophila melanogaster (Fruit fly), this protein is Sarcolamban B.